We begin with the raw amino-acid sequence, 233 residues long: UPF0502 protein Mpe_A1449 (233 aa).

It belongs to the UPF0502 family.

This chain is UPF0502 protein Mpe_A1449, found in Methylibium petroleiphilum (strain ATCC BAA-1232 / LMG 22953 / PM1).